The primary structure comprises 109 residues: Small ribosomal subunit protein uS17 (109 aa).

It belongs to the universal ribosomal protein uS17 family. In terms of assembly, part of the 30S ribosomal subunit.

One of the primary rRNA binding proteins, it binds specifically to the 5'-end of 16S ribosomal RNA. This chain is Small ribosomal subunit protein uS17, found in Methanosarcina mazei (strain ATCC BAA-159 / DSM 3647 / Goe1 / Go1 / JCM 11833 / OCM 88) (Methanosarcina frisia).